A 411-amino-acid polypeptide reads, in one-letter code: 2,3-bisphosphoglycerate-independent phosphoglycerate mutase (411 aa).

It belongs to the BPG-independent phosphoglycerate mutase family. A-PGAM subfamily.

The enzyme catalyses (2R)-2-phosphoglycerate = (2R)-3-phosphoglycerate. It functions in the pathway carbohydrate degradation; glycolysis; pyruvate from D-glyceraldehyde 3-phosphate: step 3/5. In terms of biological role, catalyzes the interconversion of 2-phosphoglycerate and 3-phosphoglycerate. This Methanosphaerula palustris (strain ATCC BAA-1556 / DSM 19958 / E1-9c) protein is 2,3-bisphosphoglycerate-independent phosphoglycerate mutase.